The sequence spans 152 residues: Putative pre-16S rRNA nuclease (152 aa).

This sequence belongs to the YqgF nuclease family.

It is found in the cytoplasm. Its function is as follows. Could be a nuclease involved in processing of the 5'-end of pre-16S rRNA. The sequence is that of Putative pre-16S rRNA nuclease from Sphingopyxis alaskensis (strain DSM 13593 / LMG 18877 / RB2256) (Sphingomonas alaskensis).